A 365-amino-acid chain; its full sequence is Phospho-N-acetylmuramoyl-pentapeptide-transferase (365 aa).

Helical transmembrane passes span 19-39 (TLLI…SSWA), 49-69 (LLIA…AVVP), 92-112 (AGTP…IAVV), 116-136 (FNPD…IGWV), 156-176 (LFLQ…YGPT), 183-203 (IMQF…FALV), 215-235 (VDGL…LLVA), 238-258 (NPAL…FVHH), 279-299 (LAAV…SGIF), and 345-365 (QIVG…MATA).

It belongs to the glycosyltransferase 4 family. MraY subfamily. It depends on Mg(2+) as a cofactor.

The protein resides in the cell inner membrane. The catalysed reaction is UDP-N-acetyl-alpha-D-muramoyl-L-alanyl-gamma-D-glutamyl-meso-2,6-diaminopimeloyl-D-alanyl-D-alanine + di-trans,octa-cis-undecaprenyl phosphate = di-trans,octa-cis-undecaprenyl diphospho-N-acetyl-alpha-D-muramoyl-L-alanyl-D-glutamyl-meso-2,6-diaminopimeloyl-D-alanyl-D-alanine + UMP. The protein operates within cell wall biogenesis; peptidoglycan biosynthesis. Functionally, catalyzes the initial step of the lipid cycle reactions in the biosynthesis of the cell wall peptidoglycan: transfers peptidoglycan precursor phospho-MurNAc-pentapeptide from UDP-MurNAc-pentapeptide onto the lipid carrier undecaprenyl phosphate, yielding undecaprenyl-pyrophosphoryl-MurNAc-pentapeptide, known as lipid I. This chain is Phospho-N-acetylmuramoyl-pentapeptide-transferase, found in Synechocystis sp. (strain ATCC 27184 / PCC 6803 / Kazusa).